The primary structure comprises 1602 residues: MAP kinase-activating death domain protein (1602 aa).

In terms of domain architecture, uDENN spans 13-267; it reads YLVIVGARHP…VPVSGQKRVD (255 aa). Residues 105 to 121 are compositionally biased toward basic and acidic residues; it reads PKEKAEGGAGPRGKEGA. The disordered stretch occupies residues 105-167; the sequence is PKEKAEGGAG…GKRRAKAGNR (63 aa). Positions 126-137 are enriched in low complexity; it reads ASEEAATESSES. Positions 138–156 are enriched in polar residues; sequence GSTLQPPSADSTPDVNQSP. Position 155 is a phosphoserine (Ser155). Over residues 157 to 166 the composition is skewed to basic residues; the sequence is RGKRRAKAGN. One can recognise a cDENN domain in the interval 288–428; that stretch reads RFTLVDFPLH…ESLELKKHLK (141 aa). Positions 430–564 constitute a dDENN domain; it reads ALASMSLNTQ…LNPSNYAFQR (135 aa). Disordered regions lie at residues 603–635 and 676–840; these read ALSVPPERDSESDPTDDSGSDSMDYDDSSSSYS and QPQK…NSTE. Residues 614 to 629 are compositionally biased toward acidic residues; sequence SDPTDDSGSDSMDYDD. Ser688 and Ser691 each carry phosphoserine. The span at 688–698 shows a compositional bias: polar residues; it reads SENSQENLPLR. A compositionally biased stretch (low complexity) spans 699-711; it reads SSSSTTASSSPST. Ser778 carries the phosphoserine modification. Residues 789–803 show a composition bias toward polar residues; it reads ESYTPRFSQHASGSR. Phosphoserine is present on residues Ser812, Ser817, and Ser819. The segment covering 826–839 has biased composition (low complexity); sequence RASSPNSTVSNNST. Phosphoserine is present on residues Ser857, Ser861, Ser895, Ser900, and Ser909. Disordered stretches follow at residues 870–920, 1030–1089, and 1113–1231; these read KGAR…SSEN, KEPD…DTRS, and TEEK…RSSE. Residues 911–920 show a composition bias toward polar residues; the sequence is QGRSSNSSEN. Residue Ser1038 is modified to Phosphoserine. Phosphothreonine occurs at positions 1040 and 1045. Ser1089 is modified (phosphoserine). The segment covering 1119–1134 has biased composition (polar residues); it reads QISADSGVSLASASQR. The span at 1151–1162 shows a compositional bias: low complexity; that stretch reads SSSQDSEVSNSS. Residues 1191-1209 show a composition bias toward polar residues; it reads SRATLSDSEIETNSATSTI. Thr1194 bears the Phosphothreonine mark. Phosphoserine is present on residues Ser1196 and Ser1225. Residues 1295 to 1370 enclose the Death domain; the sequence is GMDQGPQEMI…GLVYSQQINE (76 aa).

Belongs to the MADD family. In terms of assembly, interacts (via death domain) with TNFRSF1A (via death domain). Interacts with PIDD1. Interacts with YWHAZ. Interacts (via death domain) with KIF1B; links the motor KIF1B to Rab3-carrying vesicles in anterograde synaptic vesicle transport. Interacts with KIF1A. Interacts (via uDENN domain) with RAB3A, RAB3B, RAB3C and RAB3D; the GTP-bound form of the Rab proteins is preferred for interaction. In terms of tissue distribution, expressed in all tissues examined with the highest expression in brain.

The protein localises to the cell membrane. It localises to the cytoplasm. Its subcellular location is the cell projection. The protein resides in the axon. Guanyl-nucleotide exchange factor that regulates small GTPases of the Rab family. Converts GDP-bound inactive form of RAB27A and RAB27B to the GTP-bound active forms. Converts GDP-bound inactive form of RAB3A, RAB3C and RAB3D to the GTP-bound active forms, GTPases involved in synaptic vesicle exocytosis and vesicle secretion. Plays a role in synaptic vesicle formation and in vesicle trafficking at the neuromuscular junction. Involved in up-regulating a post-docking step of synaptic exocytosis in central synapses. Probably by binding to the motor proteins KIF1B and KIF1A, mediates motor-dependent transport of GTP-RAB3A-positive vesicles to the presynaptic nerve terminals. Plays a role in TNFA-mediated activation of the MAPK pathway, including ERK1/2. May link TNFRSF1A with MAP kinase activation. May be involved in the regulation of TNFA-induced apoptosis. The polypeptide is MAP kinase-activating death domain protein (Rattus norvegicus (Rat)).